Reading from the N-terminus, the 130-residue chain is Small ribosomal subunit protein uS9 (130 aa).

A disordered region spans residues 109 to 130 (RKKERKKYGQRAARARYQYSKR).

It belongs to the universal ribosomal protein uS9 family.

The sequence is that of Small ribosomal subunit protein uS9 from Nitratidesulfovibrio vulgaris (strain DSM 19637 / Miyazaki F) (Desulfovibrio vulgaris).